The sequence spans 390 residues: HIT domain-containing protein DDB_G0272839 (390 aa).

A disordered region spans residues 168–201; that stretch reads DNENEKEKEKEMELDNDNTNTESIPPITSKSTST. The span at 184 to 201 shows a compositional bias: low complexity; sequence DNTNTESIPPITSKSTST. The region spanning 232–343 is the HIT domain; it reads YFCNKPESFL…ISNDYNTKYL (112 aa).

The chain is HIT domain-containing protein DDB_G0272839 from Dictyostelium discoideum (Social amoeba).